Reading from the N-terminus, the 255-residue chain is Hydroxyacylglutathione hydrolase (255 aa).

Residues His59, His61, Asp63, His64, His118, Asp144, and His182 each coordinate Zn(2+).

Belongs to the metallo-beta-lactamase superfamily. Glyoxalase II family. As to quaternary structure, monomer. Zn(2+) serves as cofactor.

The catalysed reaction is an S-(2-hydroxyacyl)glutathione + H2O = a 2-hydroxy carboxylate + glutathione + H(+). The protein operates within secondary metabolite metabolism; methylglyoxal degradation; (R)-lactate from methylglyoxal: step 2/2. Its function is as follows. Thiolesterase that catalyzes the hydrolysis of S-D-lactoyl-glutathione to form glutathione and D-lactic acid. The sequence is that of Hydroxyacylglutathione hydrolase from Synechococcus sp. (strain WH7803).